The primary structure comprises 260 residues: tRNA pseudouridine synthase C (260 aa).

Residue aspartate 54 is part of the active site.

This sequence belongs to the pseudouridine synthase RluA family.

The catalysed reaction is uridine(65) in tRNA = pseudouridine(65) in tRNA. Functionally, responsible for synthesis of pseudouridine from uracil-65 in transfer RNAs. This Salmonella typhimurium (strain LT2 / SGSC1412 / ATCC 700720) protein is tRNA pseudouridine synthase C (truC).